A 616-amino-acid polypeptide reads, in one-letter code: Methionine--tRNA ligase, chloroplastic/mitochondrial (616 aa).

The short motif at 78–88 (YYVNAPPHMGS) is the 'HIGH' region element. The 'KMSKS' region signature appears at 366–370 (KMGKS). Residue K369 participates in ATP binding. A compositionally biased stretch (basic and acidic residues) spans 582-593 (LNPEKEEDEKKP). The interval 582-602 (LNPEKEEDEKKPKVGKKTGKA) is disordered.

It belongs to the class-I aminoacyl-tRNA synthetase family.

It is found in the plastid. The protein resides in the chloroplast. The protein localises to the mitochondrion. The catalysed reaction is tRNA(Met) + L-methionine + ATP = L-methionyl-tRNA(Met) + AMP + diphosphate. The polypeptide is Methionine--tRNA ligase, chloroplastic/mitochondrial (Arabidopsis thaliana (Mouse-ear cress)).